The following is a 225-amino-acid chain: UPF0173 metal-dependent hydrolase PH1671 (225 aa).

Belongs to the UPF0173 family.

The polypeptide is UPF0173 metal-dependent hydrolase PH1671 (Pyrococcus horikoshii (strain ATCC 700860 / DSM 12428 / JCM 9974 / NBRC 100139 / OT-3)).